The chain runs to 234 residues: 1-(5-phosphoribosyl)-5-[(5-phosphoribosylamino)methylideneamino] imidazole-4-carboxamide isomerase (234 aa).

Aspartate 9 acts as the Proton acceptor in catalysis. Aspartate 131 functions as the Proton donor in the catalytic mechanism.

Belongs to the HisA/HisF family.

The protein localises to the cytoplasm. The catalysed reaction is 1-(5-phospho-beta-D-ribosyl)-5-[(5-phospho-beta-D-ribosylamino)methylideneamino]imidazole-4-carboxamide = 5-[(5-phospho-1-deoxy-D-ribulos-1-ylimino)methylamino]-1-(5-phospho-beta-D-ribosyl)imidazole-4-carboxamide. It functions in the pathway amino-acid biosynthesis; L-histidine biosynthesis; L-histidine from 5-phospho-alpha-D-ribose 1-diphosphate: step 4/9. In Staphylococcus epidermidis (strain ATCC 12228 / FDA PCI 1200), this protein is 1-(5-phosphoribosyl)-5-[(5-phosphoribosylamino)methylideneamino] imidazole-4-carboxamide isomerase.